A 78-amino-acid polypeptide reads, in one-letter code: Large ribosomal subunit protein bL28 (78 aa).

Belongs to the bacterial ribosomal protein bL28 family.

This chain is Large ribosomal subunit protein bL28, found in Flavobacterium johnsoniae (strain ATCC 17061 / DSM 2064 / JCM 8514 / BCRC 14874 / CCUG 350202 / NBRC 14942 / NCIMB 11054 / UW101) (Cytophaga johnsonae).